The primary structure comprises 316 residues: 4-hydroxy-3-methylbut-2-enyl diphosphate reductase (316 aa).

C12 contributes to the [4Fe-4S] cluster binding site. H41 and H74 together coordinate (2E)-4-hydroxy-3-methylbut-2-enyl diphosphate. Residues H41 and H74 each coordinate dimethylallyl diphosphate. 2 residues coordinate isopentenyl diphosphate: H41 and H74. Position 96 (C96) interacts with [4Fe-4S] cluster. H124 lines the (2E)-4-hydroxy-3-methylbut-2-enyl diphosphate pocket. H124 contacts dimethylallyl diphosphate. H124 lines the isopentenyl diphosphate pocket. The Proton donor role is filled by E126. Residue T169 coordinates (2E)-4-hydroxy-3-methylbut-2-enyl diphosphate. [4Fe-4S] cluster is bound at residue C199. (2E)-4-hydroxy-3-methylbut-2-enyl diphosphate-binding residues include S227, S228, N229, and S271. Residues S227, S228, N229, and S271 each coordinate dimethylallyl diphosphate. The isopentenyl diphosphate site is built by S227, S228, N229, and S271.

The protein belongs to the IspH family. [4Fe-4S] cluster is required as a cofactor.

It catalyses the reaction isopentenyl diphosphate + 2 oxidized [2Fe-2S]-[ferredoxin] + H2O = (2E)-4-hydroxy-3-methylbut-2-enyl diphosphate + 2 reduced [2Fe-2S]-[ferredoxin] + 2 H(+). It carries out the reaction dimethylallyl diphosphate + 2 oxidized [2Fe-2S]-[ferredoxin] + H2O = (2E)-4-hydroxy-3-methylbut-2-enyl diphosphate + 2 reduced [2Fe-2S]-[ferredoxin] + 2 H(+). It functions in the pathway isoprenoid biosynthesis; dimethylallyl diphosphate biosynthesis; dimethylallyl diphosphate from (2E)-4-hydroxy-3-methylbutenyl diphosphate: step 1/1. It participates in isoprenoid biosynthesis; isopentenyl diphosphate biosynthesis via DXP pathway; isopentenyl diphosphate from 1-deoxy-D-xylulose 5-phosphate: step 6/6. In terms of biological role, catalyzes the conversion of 1-hydroxy-2-methyl-2-(E)-butenyl 4-diphosphate (HMBPP) into a mixture of isopentenyl diphosphate (IPP) and dimethylallyl diphosphate (DMAPP). Acts in the terminal step of the DOXP/MEP pathway for isoprenoid precursor biosynthesis. This is 4-hydroxy-3-methylbut-2-enyl diphosphate reductase from Stenotrophomonas maltophilia (strain K279a).